We begin with the raw amino-acid sequence, 270 residues long: 3-methyl-2-oxobutanoate hydroxymethyltransferase (270 aa).

Residues Asp-50 and Asp-89 each coordinate Mg(2+). Residues 50 to 51, Asp-89, and Lys-118 contribute to the 3-methyl-2-oxobutanoate site; that span reads DS. Glu-120 contributes to the Mg(2+) binding site. Glu-187 serves as the catalytic Proton acceptor.

The protein belongs to the PanB family. As to quaternary structure, homodecamer; pentamer of dimers. Mg(2+) is required as a cofactor.

It localises to the cytoplasm. The enzyme catalyses 3-methyl-2-oxobutanoate + (6R)-5,10-methylene-5,6,7,8-tetrahydrofolate + H2O = 2-dehydropantoate + (6S)-5,6,7,8-tetrahydrofolate. The protein operates within cofactor biosynthesis; (R)-pantothenate biosynthesis; (R)-pantoate from 3-methyl-2-oxobutanoate: step 1/2. Catalyzes the reversible reaction in which hydroxymethyl group from 5,10-methylenetetrahydrofolate is transferred onto alpha-ketoisovalerate to form ketopantoate. This is 3-methyl-2-oxobutanoate hydroxymethyltransferase from Helicobacter pylori (strain Shi470).